Reading from the N-terminus, the 81-residue chain is Cell division protein ZapB (81 aa).

Residues 5–81 (LEVFEKLEAK…QALLGRMEEV (77 aa)) adopt a coiled-coil conformation. K10 is modified (N6-acetyllysine). The segment at 36–67 (NNSLSQEVQNAQHQREELERENNHLKEQQNGW) is disordered. The span at 37 to 47 (NSLSQEVQNAQ) shows a compositional bias: polar residues. The span at 48–62 (HQREELERENNHLKE) shows a compositional bias: basic and acidic residues.

Belongs to the ZapB family. In terms of assembly, homodimer. The ends of the coiled-coil dimer bind to each other, forming polymers. Interacts with FtsZ.

It localises to the cytoplasm. Its function is as follows. Non-essential, abundant cell division factor that is required for proper Z-ring formation. It is recruited early to the divisome by direct interaction with FtsZ, stimulating Z-ring assembly and thereby promoting cell division earlier in the cell cycle. Its recruitment to the Z-ring requires functional FtsA or ZipA. This chain is Cell division protein ZapB, found in Shigella boydii serotype 4 (strain Sb227).